An 89-amino-acid chain; its full sequence is Small ribosomal subunit protein uS17 (89 aa).

Belongs to the universal ribosomal protein uS17 family. In terms of assembly, part of the 30S ribosomal subunit.

One of the primary rRNA binding proteins, it binds specifically to the 5'-end of 16S ribosomal RNA. The chain is Small ribosomal subunit protein uS17 from Aromatoleum aromaticum (strain DSM 19018 / LMG 30748 / EbN1) (Azoarcus sp. (strain EbN1)).